We begin with the raw amino-acid sequence, 87 residues long: Small ribosomal subunit protein uS15 (87 aa).

The protein belongs to the universal ribosomal protein uS15 family. Part of the 30S ribosomal subunit. Forms a bridge to the 50S subunit in the 70S ribosome, contacting the 23S rRNA.

Functionally, one of the primary rRNA binding proteins, it binds directly to 16S rRNA where it helps nucleate assembly of the platform of the 30S subunit by binding and bridging several RNA helices of the 16S rRNA. In terms of biological role, forms an intersubunit bridge (bridge B4) with the 23S rRNA of the 50S subunit in the ribosome. The protein is Small ribosomal subunit protein uS15 of Alkaliphilus oremlandii (strain OhILAs) (Clostridium oremlandii (strain OhILAs)).